The chain runs to 172 residues: Large ribosomal subunit protein uL10 (172 aa).

The protein belongs to the universal ribosomal protein uL10 family. Part of the ribosomal stalk of the 50S ribosomal subunit. The N-terminus interacts with L11 and the large rRNA to form the base of the stalk. The C-terminus forms an elongated spine to which L12 dimers bind in a sequential fashion forming a multimeric L10(L12)X complex.

In terms of biological role, forms part of the ribosomal stalk, playing a central role in the interaction of the ribosome with GTP-bound translation factors. The protein is Large ribosomal subunit protein uL10 of Bartonella bacilliformis (strain ATCC 35685 / KC583 / Herrer 020/F12,63).